A 578-amino-acid polypeptide reads, in one-letter code: Arginine--tRNA ligase (578 aa).

The 'HIGH' region signature appears at 127–137; sequence PNLAKEMHVGH.

This sequence belongs to the class-I aminoacyl-tRNA synthetase family. In terms of assembly, monomer.

It localises to the cytoplasm. It carries out the reaction tRNA(Arg) + L-arginine + ATP = L-arginyl-tRNA(Arg) + AMP + diphosphate. This is Arginine--tRNA ligase from Pseudomonas fluorescens (strain Pf0-1).